Here is a 430-residue protein sequence, read N- to C-terminus: Rho GTPase-activating protein 2 (430 aa).

Residues 1–36 form a disordered region; it reads MTGLVMMTKGGGCGGGGKGGRRKSTAEEEEEEEQNQ. Positions 9–18 are enriched in gly residues; it reads KGGGCGGGGK. The 14-residue stretch at 80 to 93 folds into the CRIB domain; that stretch reads IGWPTNVRHITHVT. In terms of domain architecture, Rho-GAP spans 125 to 310; that stretch reads VSAESMQCSY…TLAEREENAT (186 aa). A disordered region spans residues 307–372; that stretch reads ENATGSEGYS…HLSRHSTHED (66 aa). Residues 316-326 show a composition bias toward low complexity; it reads SPSHSSNSQTD. Over residues 347–356 the composition is skewed to acidic residues; it reads ECGEEEEVEE. The span at 357–371 shows a compositional bias: basic and acidic residues; sequence VEQHQEHLSRHSTHE.

Homodimerizes via its Rho-GAP domain and forms a tetrameric complex (2:2) with ARAC1/ROP3, ARAC2/ROP7, ARAC4/ROP2, ARAC5/ROP4, ARAC7/ROP9 or ARAC11/ROP1.

In terms of biological role, acts as a GTPase activator for the Rac-type GTPase by converting it to an inactive GDP-bound state. This Arabidopsis thaliana (Mouse-ear cress) protein is Rho GTPase-activating protein 2 (ROPGAP2).